The following is a 470-amino-acid chain: Cell division protein FtsP (470 aa).

Positions 1 to 27 form a signal peptide, tat-type signal; it reads MSFSRRQFLQASGIALCAGAIPLRANA. Residues 222–287 enclose the Plastocyanin-like domain; the sequence is VEVSRGWVRL…RREILVDMTN (66 aa).

It belongs to the FtsP family. In terms of processing, predicted to be exported by the Tat system. The position of the signal peptide cleavage has not been experimentally proven.

The protein localises to the periplasm. Cell division protein that is required for growth during stress conditions. May be involved in protecting or stabilizing the divisomal assembly under conditions of stress. This is Cell division protein FtsP from Salmonella typhi.